A 237-amino-acid polypeptide reads, in one-letter code: Probable transcriptional regulatory protein EAT1b_0153 (237 aa).

It belongs to the TACO1 family. YeeN subfamily.

Its subcellular location is the cytoplasm. In Exiguobacterium sp. (strain ATCC BAA-1283 / AT1b), this protein is Probable transcriptional regulatory protein EAT1b_0153.